We begin with the raw amino-acid sequence, 124 residues long: uncharacterized protein (124 aa).

An N-terminal signal peptide occupies residues 1–19 (MRLLVQKVILIYLARYAKS). 2 helical membrane-spanning segments follow: residues 37–57 (IAEFLWVYVGSALAYVVGVKF) and 86–108 (LGALALITIARAFCVAHINIIII).

Its subcellular location is the membrane. This is an uncharacterized protein from Saccharomyces cerevisiae (strain ATCC 204508 / S288c) (Baker's yeast).